Reading from the N-terminus, the 448-residue chain is Phosphoglucosamine mutase (448 aa).

S100 acts as the Phosphoserine intermediate in catalysis. 4 residues coordinate Mg(2+): S100, D240, D242, and D244. S100 bears the Phosphoserine mark.

Belongs to the phosphohexose mutase family. As to quaternary structure, homodimer, may form a complex with CdaA. Requires Mg(2+) as cofactor. In terms of processing, activated by phosphorylation.

The catalysed reaction is alpha-D-glucosamine 1-phosphate = D-glucosamine 6-phosphate. Its function is as follows. Catalyzes the conversion of glucosamine-6-phosphate to glucosamine-1-phosphate. Glucosamine-1-phosphate is used for cell wall biosynthesis. This chain is Phosphoglucosamine mutase, found in Bacillus subtilis (strain 168).